The following is a 336-amino-acid chain: MATIKDVAKMAGVSTTTVSHVINKTRFVAKDTEEAVLSAIKQLNYSPSAVARSLKVNTTKSIGMIVTTSEAPYFAEIIHSVEEHCYRQGYSLFLCNTQNDPEKVKNHLEMLAKKRVDGLLVMCSEYTQDSLDLLSSFSTIPMVVMDWGPNANTDVIDDHSFDGGYLATKHLIECGHKKIGIICGELNKTTARTRYEGFEKAMEEAKLTINPSWVLEGAFEPEDGYECMNRLLTQEELPTALFCCNDVMALGAISALTEKCLRVPEDMSIIGYDDIHASRFYAPPLTTIHQSKLRLGRQAVNILLERITHKDEGVQQYSRIDITPELIIRKSVKSIL.

The 55-residue stretch at 2–56 (ATIKDVAKMAGVSTTTVSHVINKTRFVAKDTEEAVLSAIKQLNYSPSAVARSLKV) folds into the HTH lacI-type domain. The H-T-H motif DNA-binding region spans 4-23 (IKDVAKMAGVSTTTVSHVIN). Residues 48–56 (SAVARSLKV) mediate DNA binding. Tyr-73, Lys-188, Thr-190, Phe-219, and Asp-273 together coordinate hypoxanthine.

Homodimer.

The protein operates within purine metabolism; purine nucleotide biosynthesis [regulation]. Functionally, is the main repressor of the genes involved in the de novo synthesis of purine nucleotides, regulating purB, purC, purEK, purF, purHD, purL, purMN and guaBA expression. PurR is allosterically activated to bind its cognate DNA by binding the purine corepressors, hypoxanthine or guanine, thereby effecting transcription repression. This Haemophilus influenzae (strain PittGG) protein is HTH-type transcriptional repressor PurR.